Consider the following 157-residue polypeptide: Tripartite terminase subunit 2 (157 aa).

A disordered region spans residues 1–69; the sequence is MSWAKQRVPF…DGEDGHALPD (69 aa). Positions 11 to 27 are enriched in acidic residues; the sequence is LDDDDGEEENDVQDDVD.

It belongs to the herpesviridae TRM2 protein family. In terms of assembly, associates with TRM1 and TRM3 to form the tripartite terminase complex.

It localises to the host nucleus. In terms of biological role, component of the molecular motor that translocates viral genomic DNA in empty capsid during DNA packaging. Forms a tripartite terminase complex together with TRM1 and TRM3 in the host cytoplasm. Once the complex reaches the host nucleus, it interacts with the capsid portal vertex. This portal forms a ring in which genomic DNA is translocated into the capsid. This chain is Tripartite terminase subunit 2, found in Homo sapiens (Human).